A 447-amino-acid polypeptide reads, in one-letter code: Kynurenine 3-monooxygenase (447 aa).

It belongs to the aromatic-ring hydroxylase family. KMO subfamily. FAD serves as cofactor.

The catalysed reaction is L-kynurenine + NADPH + O2 + H(+) = 3-hydroxy-L-kynurenine + NADP(+) + H2O. Its pathway is cofactor biosynthesis; NAD(+) biosynthesis; quinolinate from L-kynurenine: step 1/3. Catalyzes the hydroxylation of L-kynurenine (L-Kyn) to form 3-hydroxy-L-kynurenine (L-3OHKyn). Required for synthesis of quinolinic acid. This chain is Kynurenine 3-monooxygenase, found in Christiangramia forsetii (strain DSM 17595 / CGMCC 1.15422 / KT0803) (Gramella forsetii).